A 267-amino-acid chain; its full sequence is Interleukin-1 alpha (267 aa).

Positions 1-112 (MAKVPDLFED…DPEEGIIKPR (112 aa)) are excised as a propeptide. Asn64 carries N-linked (GlcNAc...) asparagine glycosylation. Lys82 carries the N6-acetyllysine modification. Positions 82-86 (KKRRL) are nuclear localization signal (NLS). Residue Ser87 is modified to Phosphoserine. N-linked (GlcNAc...) asparagine glycosylation is found at Asn100 and Asn141.

Belongs to the IL-1 family. Monomer. Interacts with TMED10; the interaction mediates the translocation from the cytoplasm into the ERGIC (endoplasmic reticulum-Golgi intermediate compartment) and thereby secretion. Interacts with IL1R1. Interacts with S100A13; this interaction is the first step in the export of IL1A, followed by direct translocation of this complex across the plasma membrane. Post-translationally, acetylated within its nuclear localization sequence, which impacts subcellular localization. In terms of processing, proteolytic processed by CAPN1 in a calcium-dependent manner. Cleavage from 31 kDa precursor to 18 kDa biologically active molecules. Phosphorylated. Phosphorylation greatly enhances susceptibility to digestion and promotes the conversion of pre-IL1A alpha to the biologically active IL1A.

It localises to the nucleus. The protein localises to the cytoplasm. Its subcellular location is the secreted. Cytokine constitutively present intracellularly in nearly all resting non-hematopoietic cells that plays an important role in inflammation and bridges the innate and adaptive immune systems. After binding to its receptor IL1R1 together with its accessory protein IL1RAP, forms the high affinity interleukin-1 receptor complex. Signaling involves the recruitment of adapter molecules such as MYD88, IRAK1 or IRAK4. In turn, mediates the activation of NF-kappa-B and the three MAPK pathways p38, p42/p44 and JNK pathways. Within the cell, acts as an alarmin and cell death results in its liberation in the extracellular space after disruption of the cell membrane to induce inflammation and alert the host to injury or damage. In addition to its role as a danger signal, which occurs when the cytokine is passively released by cell necrosis, directly senses DNA damage and acts as signal for genotoxic stress without loss of cell integrity. The protein is Interleukin-1 alpha (IL1A) of Oryctolagus cuniculus (Rabbit).